The chain runs to 230 residues: Ribose-5-phosphate isomerase A (230 aa).

Substrate contacts are provided by residues 32–35 (TGST), 85–88 (DGAD), and 98–101 (KGGG). Catalysis depends on E107, which acts as the Proton acceptor. K125 lines the substrate pocket.

Belongs to the ribose 5-phosphate isomerase family. In terms of assembly, homodimer.

The enzyme catalyses aldehydo-D-ribose 5-phosphate = D-ribulose 5-phosphate. Its pathway is carbohydrate degradation; pentose phosphate pathway; D-ribose 5-phosphate from D-ribulose 5-phosphate (non-oxidative stage): step 1/1. In terms of biological role, catalyzes the reversible conversion of ribose-5-phosphate to ribulose 5-phosphate. The chain is Ribose-5-phosphate isomerase A from Burkholderia ambifaria (strain MC40-6).